The primary structure comprises 241 residues: Probable transcriptional regulatory protein Maqu_2154 (241 aa).

The protein belongs to the TACO1 family.

The protein localises to the cytoplasm. The sequence is that of Probable transcriptional regulatory protein Maqu_2154 from Marinobacter nauticus (strain ATCC 700491 / DSM 11845 / VT8) (Marinobacter aquaeolei).